The primary structure comprises 406 residues: Probable endo-xylogalacturonan hydrolase A (406 aa).

The signal sequence occupies residues 1–18 (MLYPRNLALFSLLSLSSA). 4 PbH1 repeats span residues 183 to 213 (TQHV…DIGA), 214 to 235 (STHV…AFKP), 237 to 257 (SNYV…SVGS), and 299 to 320 (VKNV…QIES). The Proton donor role is filled by Asp228. His251 is an active-site residue. An N-linked (GlcNAc...) asparagine glycan is attached at Asn301.

This sequence belongs to the glycosyl hydrolase 28 family.

It localises to the secreted. Functionally, pectinolytic enzyme involved in the degradation of xylogalacturonan (xga), a galacturonan backbone heavily substituted with xylose, and which is one important component of the hairy regions of pectin. Activity requires a galacturonic acid backbone substituted with xylose. The polypeptide is Probable endo-xylogalacturonan hydrolase A (xghA) (Aspergillus fumigatus (strain ATCC MYA-4609 / CBS 101355 / FGSC A1100 / Af293) (Neosartorya fumigata)).